The sequence spans 512 residues: Glutathione-binding protein GsiB (512 aa).

The signal sequence occupies residues 1–26; sequence MTQFITHKWLAALGLASSIAAFPALA.

This sequence belongs to the bacterial solute-binding protein 5 family. The complex is composed of two ATP-binding proteins (GsiA), two transmembrane proteins (GsiC and GsiD) and a solute-binding protein (GsiB).

It is found in the periplasm. In terms of biological role, part of the ABC transporter complex GsiABCD involved in glutathione import. Binds glutathione. The polypeptide is Glutathione-binding protein GsiB (Salmonella choleraesuis (strain SC-B67)).